We begin with the raw amino-acid sequence, 571 residues long: RUN and FYVE domain-containing protein 4 (571 aa).

An RUN domain is found at 33–166 (TDTSAELHRL…VAFELDLQQP (134 aa)). A disordered region spans residues 174-207 (MFSESRCSSSTQTQGRRPRKNKDAPKKIPAAYGG). The span at 178–188 (SRCSSSTQTQG) shows a compositional bias: polar residues. Positions 408-481 (EVSLQDEIKS…ERRDAMYQEE (74 aa)) form a coiled coil. The FYVE-type zinc-finger motif lies at 474 to 567 (RDAMYQEELG…CCPPCAQGRE (94 aa)). Zn(2+) is bound by residues Cys521, Cys524, Cys537, Cys540, Cys545, Cys548, Cys559, and Cys562.

In terms of assembly, forms homodimers (via coiled coil domain). Interacts with RAB7A. Forms a ternary complex with RAB7A and LAMP2; the interaction with RAB7A is mediated by RUFY4 (via RUN and coiled coil domains). Interacts with GTP-, but not GDP-bound ARL8A and ARL8B. Interacts with dynactin/DCTN1 and the dynein intermediate chain DYNC1I1/2.

It is found in the cytoplasmic vesicle. Its subcellular location is the autophagosome. The protein localises to the lysosome. In terms of biological role, ARL8 effector that promotes the coupling of endolysosomes to dynein-dynactin for retrograde transport along microtubules. Acts by binding both GTP-bound ARL8 and dynein-dynactin. In nonneuronal cells, promotes concentration of endolysosomes in the juxtanuclear area. In hippocampal neurons, drives retrograde transport of endolysosomes from the axon to the soma. Positive regulator of macroautophagy in dendritic cells. Increases autophagic flux, probably by stimulating both autophagosome formation and facilitating tethering with lysosomes. Binds to phosphatidylinositol 3-phosphate (PtdIns3P) through its FYVE-type zinc finger. Positive regulator of osteosclast bone-resorbing activity, possibly by promoting late endosome-lysosome fusion by acting as an adapter protein between RAB7A on late endosomes and LAMP2 on primary lysosomes. The chain is RUN and FYVE domain-containing protein 4 (RUFY4) from Homo sapiens (Human).